A 275-amino-acid chain; its full sequence is Protein CIMAP1C (275 aa).

STPGR repeat units lie at residues 200 to 225 (PGPA…MAKR) and 236 to 261 (PGPG…MGIK).

The protein belongs to the CIMAP family.

This chain is Protein CIMAP1C (CIMAP1C), found in Mus musculus (Mouse).